The sequence spans 449 residues: Polyadenylation factor subunit 2 (449 aa).

WD repeat units follow at residues 77-116, 119-158, 161-200, 203-242, 245-285, 288-328, and 337-376; these read KVKHVIPAITWTPEGRRLVVATYSGEFSLWNGSSFNFESI, AHDSAVTVMQYSHAGDWLISGDADGTIKIWQPNFNMVKVL, AHTECMRDISFSYSDQKFVTCSDDNVLKIWNFSNGQQERV, GHHWDVKSCDWHPKMGLIVSGSKDNLIKLWDPRTGRNVST, GLKH…RELQ, RDDM…SNST, and AHEKSVTSLAYSPVGHILASAAKDRTIRFWARSRPVDPNA. The tract at residues 411-432 is disordered; it reads LPPANETNLGTPQPSILGSESI. The segment covering 415–432 has biased composition (polar residues); sequence NETNLGTPQPSILGSESI.

Its subcellular location is the nucleus. Its function is as follows. Required for 3'-end cleavage and polyadenylation of pre-mRNAs. Also involved in chromosome segregation where it has a role in chromosome attachment to the mitotic spindle. This chain is Polyadenylation factor subunit 2 (PSF2), found in Eremothecium gossypii (strain ATCC 10895 / CBS 109.51 / FGSC 9923 / NRRL Y-1056) (Yeast).